Consider the following 513-residue polypeptide: ATP synthase subunit alpha (513 aa).

Glycine 169–threonine 176 contributes to the ATP binding site.

The protein belongs to the ATPase alpha/beta chains family. In terms of assembly, F-type ATPases have 2 components, CF(1) - the catalytic core - and CF(0) - the membrane proton channel. CF(1) has five subunits: alpha(3), beta(3), gamma(1), delta(1), epsilon(1). CF(0) has three main subunits: a(1), b(2) and c(9-12). The alpha and beta chains form an alternating ring which encloses part of the gamma chain. CF(1) is attached to CF(0) by a central stalk formed by the gamma and epsilon chains, while a peripheral stalk is formed by the delta and b chains.

The protein localises to the cell inner membrane. The catalysed reaction is ATP + H2O + 4 H(+)(in) = ADP + phosphate + 5 H(+)(out). Produces ATP from ADP in the presence of a proton gradient across the membrane. The alpha chain is a regulatory subunit. In Francisella tularensis subsp. tularensis (strain WY96-3418), this protein is ATP synthase subunit alpha.